Consider the following 1479-residue polypeptide: Type VII secretion system protein EssC (1479 aa).

At 1 to 229 (MHKLIIKYNK…RPPQPIQKNN (229 aa)) the chain is on the cytoplasmic side. A helical membrane pass occupies residues 230 to 252 (TVIWRSIIPPLVMIALTVVIFLV). Residues 253 to 256 (RPIG) lie on the Extracellular side of the membrane. A helical membrane pass occupies residues 257–279 (IYILMMIGMSTVTIVFGITTYFS). The Cytoplasmic segment spans residues 280–1479 (EKKKYNKDVE…QAYQKIRWFK (1200 aa)). 2 FtsK domains span residues 652–846 (DDIL…QDSN) and 997–1183 (QGPM…SEVS). ATP-binding positions include 672–679 (GTTGSGKS) and 1014–1021 (GSPGYGRT).

Belongs to the EssC family. Homooligomer. Interacts with EsaE.

The protein localises to the cell membrane. Functionally, component of the type VII secretion system (Ess). Required for the secretion of substrates including EsxA and EsxB. However, unable to support secretion of the substrate protein EsxC. The sequence is that of Type VII secretion system protein EssC from Staphylococcus aureus (strain Mu50 / ATCC 700699).